Reading from the N-terminus, the 378-residue chain is UPF0725 protein At1g23970 (378 aa).

The protein belongs to the UPF0725 (EMB2204) family.

In Arabidopsis thaliana (Mouse-ear cress), this protein is UPF0725 protein At1g23970.